Here is a 966-residue protein sequence, read N- to C-terminus: Phosphoenolpyruvate carboxylase, housekeeping isozyme (966 aa).

A Phosphoserine modification is found at serine 11. Catalysis depends on residues histidine 172 and lysine 601.

It belongs to the PEPCase type 1 family. Homotetramer. Requires Mg(2+) as cofactor.

Its subcellular location is the cytoplasm. The catalysed reaction is oxaloacetate + phosphate = phosphoenolpyruvate + hydrogencarbonate. With respect to regulation, by light-reversible phosphorylation. Through the carboxylation of phosphoenolpyruvate (PEP) it forms oxaloacetate, a four-carbon dicarboxylic acid source for the tricarboxylic acid cycle. This is Phosphoenolpyruvate carboxylase, housekeeping isozyme from Saccharum hybrid (Sugarcane).